A 926-amino-acid polypeptide reads, in one-letter code: Piwi-like protein Ago3 (926 aa).

The disordered stretch occupies residues Met1–Gly62. Low complexity predominate over residues Ser26 to Ser56. A PAZ domain is found at Thr339 to Gly455. Positions Leu620–His912 constitute a Piwi domain. Gln672 provides a ligand contact to Mg(2+). Active-site residues include Asp697, Glu735, Asp767, and His901. Leu926 is a binding site for Mg(2+).

It belongs to the argonaute family. Piwi subfamily. Interacts (when symmetrically methylated) with Papi/TDRKH. Interacts with Vasa. Mg(2+) is required as a cofactor. In terms of processing, arginine methylation is required for the interaction with Tudor domain-containing protein Papi/TDRKH. In terms of tissue distribution, highly expressed in the larval testis, pupal ovary and adult eggs.

The protein localises to the cytoplasm. Its function is as follows. Endoribonuclease that plays a central role during spermatogenesis by repressing transposable elements and preventing their mobilization, which is essential for the germline integrity. Plays an essential role in meiotic differentiation of spermatocytes, germ cell differentiation and in self-renewal of spermatogonial stem cells. Its presence in oocytes suggests that it may participate in similar functions during oogenesis in females. Acts via the piRNA metabolic process, which mediates the repression of transposable elements during meiosis by forming complexes composed of piRNAs and Piwi proteins and govern the methylation and subsequent repression of transposons. Directly binds piRNAs, a class of 24 to 30 nucleotide RNAs that are generated by a Dicer-independent mechanism and are primarily derived from transposons and other repeated sequence elements. Strongly prefers a have adenine at position 10 of their guide (g10A preference). Plays a key role in the piRNA amplification loop, also named ping-pong amplification cycle: antisense piRNA-bound Siwi and sense piRNA-bound Ago3 reciprocally cleave complementary transcripts, to couple the amplification of piRNAs with the repression of transposable elements. The sequence is that of Piwi-like protein Ago3 (AGO3) from Bombyx mori (Silk moth).